A 102-amino-acid chain; its full sequence is Large ribosomal subunit protein uL24 (102 aa).

Belongs to the universal ribosomal protein uL24 family. Part of the 50S ribosomal subunit.

One of two assembly initiator proteins, it binds directly to the 5'-end of the 23S rRNA, where it nucleates assembly of the 50S subunit. In terms of biological role, one of the proteins that surrounds the polypeptide exit tunnel on the outside of the subunit. The chain is Large ribosomal subunit protein uL24 from Cupriavidus metallidurans (strain ATCC 43123 / DSM 2839 / NBRC 102507 / CH34) (Ralstonia metallidurans).